A 354-amino-acid chain; its full sequence is S-adenosylmethionine:tRNA ribosyltransferase-isomerase (354 aa).

Belongs to the QueA family. As to quaternary structure, monomer.

It is found in the cytoplasm. The catalysed reaction is 7-aminomethyl-7-carbaguanosine(34) in tRNA + S-adenosyl-L-methionine = epoxyqueuosine(34) in tRNA + adenine + L-methionine + 2 H(+). It participates in tRNA modification; tRNA-queuosine biosynthesis. Its function is as follows. Transfers and isomerizes the ribose moiety from AdoMet to the 7-aminomethyl group of 7-deazaguanine (preQ1-tRNA) to give epoxyqueuosine (oQ-tRNA). The sequence is that of S-adenosylmethionine:tRNA ribosyltransferase-isomerase from Methylobacterium radiotolerans (strain ATCC 27329 / DSM 1819 / JCM 2831 / NBRC 15690 / NCIMB 10815 / 0-1).